The chain runs to 56 residues: Protein translocase subunit SecE (56 aa).

A helical transmembrane segment spans residues 30 to 50 (VFWLVLFVSIFLGIVDYLMFL).

It belongs to the SecE/SEC61-gamma family. As to quaternary structure, component of the Sec protein translocase complex. Heterotrimer consisting of SecY, SecE and SecG subunits. The heterotrimers can form oligomers, although 1 heterotrimer is thought to be able to translocate proteins. Interacts with the ribosome. Interacts with SecDF, and other proteins may be involved. Interacts with SecA.

It is found in the cell inner membrane. Its function is as follows. Essential subunit of the Sec protein translocation channel SecYEG. Clamps together the 2 halves of SecY. May contact the channel plug during translocation. The protein is Protein translocase subunit SecE of Borreliella burgdorferi (strain ATCC 35210 / DSM 4680 / CIP 102532 / B31) (Borrelia burgdorferi).